The sequence spans 322 residues: Pantothenate kinase (322 aa).

100–107 provides a ligand contact to ATP; it reads GSVAVGKS.

Belongs to the prokaryotic pantothenate kinase family.

It localises to the cytoplasm. The catalysed reaction is (R)-pantothenate + ATP = (R)-4'-phosphopantothenate + ADP + H(+). The protein operates within cofactor biosynthesis; coenzyme A biosynthesis; CoA from (R)-pantothenate: step 1/5. This Agrobacterium fabrum (strain C58 / ATCC 33970) (Agrobacterium tumefaciens (strain C58)) protein is Pantothenate kinase.